Reading from the N-terminus, the 51-residue chain is MIICKTAHEITLMREAGKIVSATLEELKNHIRPGVTTKELDAIAEEVIRSH.

This sequence belongs to the peptidase M24A family. Methionine aminopeptidase type 1 subfamily. As to quaternary structure, monomer. The cofactor is Co(2+). Zn(2+) is required as a cofactor. It depends on Mn(2+) as a cofactor. Fe(2+) serves as cofactor.

The enzyme catalyses Release of N-terminal amino acids, preferentially methionine, from peptides and arylamides.. In terms of biological role, removes the N-terminal methionine from nascent proteins. The N-terminal methionine is often cleaved when the second residue in the primary sequence is small and uncharged (Met-Ala-, Cys, Gly, Pro, Ser, Thr, or Val). Requires deformylation of the N(alpha)-formylated initiator methionine before it can be hydrolyzed. This Geobacillus stearothermophilus (Bacillus stearothermophilus) protein is Methionine aminopeptidase (map).